We begin with the raw amino-acid sequence, 770 residues long: Protein PAT1 homolog 1 (770 aa).

The segment at 1 to 26 (MFRYESLEDCPLDEDEDAFQGLGEED) is disordered. The tract at residues 1–84 (MFRYESLEDC…EMDLLGDHEE (84 aa)) is region A; interaction with DDX6/RCK. Positions 1-397 (MFRYESLEDC…HRSSHQDHLR (397 aa)) are involved in nuclear foci localization. Residues 7-26 (LEDCPLDEDEDAFQGLGEED) are compositionally biased toward acidic residues. A region N; interaction with decapping machinery region spans residues 85 to 388 (NLAERLSKMV…LNGAGDRGSH (304 aa)). The short motif at 86-95 (LAERLSKMVI) is the Nuclear export signal element. The residue at position 177 (serine 177) is a Phosphoserine. Position 178 is a phosphothreonine (threonine 178). Serine 179 and serine 184 each carry phosphoserine. Threonine 194 carries the post-translational modification Phosphothreonine. An asymmetric dimethylarginine mark is found at arginine 217, arginine 223, and arginine 263. The involved in RNA-binding stretch occupies residues 223-397 (RYPAPYGERM…HRSSHQDHLR (175 aa)). A Phosphoserine modification is found at serine 278. An Asymmetric dimethylarginine modification is found at arginine 284. Positions 314 to 323 (GFRAFFSAPP) are enriched in low complexity. Disordered regions lie at residues 314 to 344 (GFRA…QNLR) and 360 to 399 (QHRR…LRKD). Over residues 324–337 (SATPPPQQHPPGPG) the composition is skewed to pro residues. Residues 367–380 (QRQQQNRSQHRNLN) show a composition bias toward low complexity. Arginine 385 carries the post-translational modification Omega-N-methylarginine. Positions 385–399 (RGSHRSSHQDHLRKD) are enriched in basic and acidic residues. The interval 389 to 448 (RSSHQDHLRKDPYANLMLQREKDWVSKIQMMQLQSTDPYLDDFYYQNYFEKLEKLSAAEE) is region H. The segment at 398–770 (KDPYANLMLQ…TKLQLVQGIR (373 aa)) is involved in nuclear speckle localization. The tract at residues 449–770 (IQGDGPKKER…TKLQLVQGIR (322 aa)) is region C.

It belongs to the PAT1 family. Interacts (via region A) with DDX6/RCK. Interacts (via region H and region C) with LSM1 and LSM4. Interacts (via region N) with DCP1A, DCP2, EDC3, EDC4 and XRN1. Interacts with the CCR4-NOT complex. Interacts with the Lsm-containing SMN-Sm protein complex. Interacts with EIF4ENIF1/4E-T. As to expression, ubiquitous.

The protein localises to the cytoplasm. Its subcellular location is the P-body. It is found in the nucleus. The protein resides in the PML body. It localises to the nucleus speckle. Its function is as follows. RNA-binding protein involved in deadenylation-dependent decapping of mRNAs, leading to the degradation of mRNAs. Acts as a scaffold protein that connects deadenylation and decapping machinery. Required for cytoplasmic mRNA processing body (P-body) assembly. (Microbial infection) In case of infection, required for translation and replication of hepatitis C virus (HCV). The sequence is that of Protein PAT1 homolog 1 (PATL1) from Homo sapiens (Human).